The chain runs to 838 residues: Probable beta-glucosidase I (838 aa).

A glycan (N-linked (GlcNAc...) asparagine) is linked at Asn197. Asp225 is an active-site residue. The PA14 domain occupies 395 to 555 (DGKKGFKFRV…SQEELISKAA (161 aa)). An N-linked (GlcNAc...) asparagine glycan is attached at Asn493.

Belongs to the glycosyl hydrolase 3 family.

The protein resides in the secreted. It catalyses the reaction Hydrolysis of terminal, non-reducing beta-D-glucosyl residues with release of beta-D-glucose.. It participates in glycan metabolism; cellulose degradation. Functionally, beta-glucosidases are one of a number of cellulolytic enzymes involved in the degradation of cellulosic biomass. Catalyzes the last step releasing glucose from the inhibitory cellobiose. The polypeptide is Probable beta-glucosidase I (bglI) (Aspergillus fumigatus (strain ATCC MYA-4609 / CBS 101355 / FGSC A1100 / Af293) (Neosartorya fumigata)).